We begin with the raw amino-acid sequence, 453 residues long: Ribosomal protein uS12 methylthiotransferase RimO (453 aa).

One can recognise an MTTase N-terminal domain in the interval 5 to 120 (PKVGFVSLGC…VMQAVHSHLP (116 aa)). [4Fe-4S] cluster-binding residues include C14, C50, C79, C151, C155, and C158. One can recognise a Radical SAM core domain in the interval 137 to 382 (LTPRHYAYLK…MEVAEEVSAN (246 aa)). Positions 385 to 453 (QRKVGKTLKV…ADGHDLWGEV (69 aa)) constitute a TRAM domain.

The protein belongs to the methylthiotransferase family. RimO subfamily. [4Fe-4S] cluster is required as a cofactor.

The protein resides in the cytoplasm. It carries out the reaction L-aspartate(89)-[ribosomal protein uS12]-hydrogen + (sulfur carrier)-SH + AH2 + 2 S-adenosyl-L-methionine = 3-methylsulfanyl-L-aspartate(89)-[ribosomal protein uS12]-hydrogen + (sulfur carrier)-H + 5'-deoxyadenosine + L-methionine + A + S-adenosyl-L-homocysteine + 2 H(+). Catalyzes the methylthiolation of an aspartic acid residue of ribosomal protein uS12. The sequence is that of Ribosomal protein uS12 methylthiotransferase RimO from Burkholderia lata (strain ATCC 17760 / DSM 23089 / LMG 22485 / NCIMB 9086 / R18194 / 383).